A 111-amino-acid chain; its full sequence is SPbeta prophage-derived uncharacterized protein YopW (111 aa).

The polypeptide is SPbeta prophage-derived uncharacterized protein YopW (yopW) (Bacillus subtilis (strain 168)).